The primary structure comprises 503 residues: Arabinose import ATP-binding protein AraG 1 (503 aa).

ABC transporter domains lie at 5–240 (LRFD…MVGR) and 251–497 (RALG…LPQT). Residue 37–44 (GENGAGKS) participates in ATP binding.

The protein belongs to the ABC transporter superfamily. Arabinose importer (TC 3.A.1.2.2) family. The complex is composed of two ATP-binding proteins (AraG), two transmembrane proteins (AraH) and a solute-binding protein (AraF).

It is found in the cell inner membrane. The catalysed reaction is L-arabinose(out) + ATP + H2O = L-arabinose(in) + ADP + phosphate + H(+). In terms of biological role, part of the ABC transporter complex AraFGH involved in arabinose import. Responsible for energy coupling to the transport system. The chain is Arabinose import ATP-binding protein AraG 1 from Burkholderia lata (strain ATCC 17760 / DSM 23089 / LMG 22485 / NCIMB 9086 / R18194 / 383).